The primary structure comprises 317 residues: uncharacterized protein (317 aa).

Belongs to the asfivirus F317L family.

It localises to the virion. This is an uncharacterized protein from African swine fever virus (isolate Tick/South Africa/Pretoriuskop Pr4/1996) (ASFV).